Reading from the N-terminus, the 381-residue chain is Cytochrome b (381 aa).

4 helical membrane-spanning segments follow: residues 34–54 (FGSL…FLAM), 78–99 (WLIR…YLHI), 114–134 (WNTG…GYVL), and 179–199 (FFTF…VHLL). Heme b-binding residues include His-84 and His-98. The heme b site is built by His-183 and His-197. An a ubiquinone-binding site is contributed by His-202. A run of 4 helical transmembrane segments spans residues 227–247 (YKDL…TLFS), 289–309 (LGGV…PTLH), 321–341 (LTQI…WIGG), and 348–368 (FIII…LLMP).

It belongs to the cytochrome b family. The cytochrome bc1 complex contains 3 respiratory subunits (MT-CYB, CYC1 and UQCRFS1), 2 core proteins (UQCRC1 and UQCRC2) and probably 6 low-molecular weight proteins. It depends on heme b as a cofactor.

It is found in the mitochondrion inner membrane. Component of the ubiquinol-cytochrome c reductase complex (complex III or cytochrome b-c1 complex) that is part of the mitochondrial respiratory chain. The b-c1 complex mediates electron transfer from ubiquinol to cytochrome c. Contributes to the generation of a proton gradient across the mitochondrial membrane that is then used for ATP synthesis. This Chelonia mydas (Green sea-turtle) protein is Cytochrome b (MT-CYB).